The primary structure comprises 351 residues: Large ribosomal subunit protein uL3 (351 aa).

Disordered stretches follow at residues 1–31 (MGHR…TPRT) and 246–271 (KGSR…GQLG).

This sequence belongs to the universal ribosomal protein uL3 family. Part of the 50S ribosomal subunit. Forms a cluster with proteins L14 and L24e.

One of the primary rRNA binding proteins, it binds directly near the 3'-end of the 23S rRNA, where it nucleates assembly of the 50S subunit. The protein is Large ribosomal subunit protein uL3 of Saccharolobus solfataricus (strain ATCC 35092 / DSM 1617 / JCM 11322 / P2) (Sulfolobus solfataricus).